The following is a 300-amino-acid chain: U1 small nuclear ribonucleoprotein 70 kDa homolog (300 aa).

The 92-residue stretch at 107–198 (RTIFIGRLPY…RTVKYFKPRR (92 aa)) folds into the RRM domain. Disordered stretches follow at residues 204–248 (GGRG…AYSA) and 263–300 (NRPL…APDY). Residues 265-279 (PLLSAATPTAAVTSV) show a composition bias toward low complexity.

As to quaternary structure, component of the spliceosome, where it is associated with snRNP U1. Binds stem loop I of U1 snRNA. Interacts with mRNA.

It localises to the nucleus. Functionally, involved in nuclear mRNA splicing. This Saccharomyces cerevisiae (strain ATCC 204508 / S288c) (Baker's yeast) protein is U1 small nuclear ribonucleoprotein 70 kDa homolog (SNP1).